The sequence spans 492 residues: UPF0236 protein TTE1650/TTE2708 (492 aa).

This sequence belongs to the UPF0236 family.

The polypeptide is UPF0236 protein TTE1650/TTE2708 (Caldanaerobacter subterraneus subsp. tengcongensis (strain DSM 15242 / JCM 11007 / NBRC 100824 / MB4) (Thermoanaerobacter tengcongensis)).